The following is a 300-amino-acid chain: tRNA pseudouridine synthase B (300 aa).

Asp47 acts as the Nucleophile in catalysis.

The protein belongs to the pseudouridine synthase TruB family. Type 1 subfamily.

It carries out the reaction uridine(55) in tRNA = pseudouridine(55) in tRNA. Its function is as follows. Responsible for synthesis of pseudouridine from uracil-55 in the psi GC loop of transfer RNAs. This chain is tRNA pseudouridine synthase B, found in Azoarcus sp. (strain BH72).